The following is a 157-amino-acid chain: Protein MG115 (157 aa).

This sequence belongs to the CinA family.

This is Protein MG115 from Mycoplasma genitalium (strain ATCC 33530 / DSM 19775 / NCTC 10195 / G37) (Mycoplasmoides genitalium).